Consider the following 485-residue polypeptide: Cytochrome P450 monooxygenase tndB (485 aa).

A helical transmembrane segment spans residues 20 to 40; it reads VYGISAVIAVGLAIYSASLAI. A heme-binding site is contributed by cysteine 481.

This sequence belongs to the cytochrome P450 family. Heme serves as cofactor.

The protein resides in the membrane. It functions in the pathway secondary metabolite biosynthesis; terpenoid biosynthesis. Functionally, cytochrome P450 monooxygenase; part of the gene cluster that mediates the biosynthesis of talaronoid C, a fusicoccane diterpenoid with an unprecedented tricyclic 5/8/6 ring system. The first step in the pathway is performed by the fusicoccadiene synthase tndC that possesses both prenyl transferase and terpene cyclase activity, converting isopentenyl diphosphate and dimethylallyl diphosphate into geranylgeranyl diphosphate (GGDP) and further converting GGDP into talarodiene, a precursor for talaronoid C. The remaining enzymes from the cluster include the cytochrome P450 monooxygenase tndB, the aldehyde reductase tndE and the alcohol dehydrogenase tndF that are involved in the conversion of talarodiene into talaronoid C. This Aspergillus flavipes protein is Cytochrome P450 monooxygenase tndB.